The sequence spans 205 residues: E3 ubiquitin-protein ligase complex slx8-rfp subunit rfp2 (205 aa).

The segment at 147 to 190 (CAKCGNELVSDEKKSIFAAKCGHLFCSTCAKELRKKTVPCPVQH) adopts an RING-type; degenerate zinc-finger fold.

In terms of assembly, part of an E3 ubiquitin complex including rfp1, rfp2 and slx8. Interacts with slx8.

It is found in the nucleus. The catalysed reaction is S-ubiquitinyl-[E2 ubiquitin-conjugating enzyme]-L-cysteine + [acceptor protein]-L-lysine = [E2 ubiquitin-conjugating enzyme]-L-cysteine + N(6)-ubiquitinyl-[acceptor protein]-L-lysine.. It functions in the pathway protein modification; protein ubiquitination. Mediates ubiquitination and subsequent desumoylation/degradation of sumoylated proteins and proteins containing SUMO-like domains. Involved in maintaining genome stability where it acts in the cellular response to DNA damage. In Schizosaccharomyces pombe (strain 972 / ATCC 24843) (Fission yeast), this protein is E3 ubiquitin-protein ligase complex slx8-rfp subunit rfp2 (rfp2).